Reading from the N-terminus, the 508-residue chain is Abl interactor 1 (508 aa).

An N-acetylalanine modification is found at A2. Positions 18–79 are required for binding to WASF1; it reads ALIESYQNLT…NNVLQLLDIQ (62 aa). Positions 45 to 107 constitute a t-SNARE coiled-coil homology domain; sequence KALEETKAYT…DIHKEKVARR (63 aa). Y53 carries the post-translational modification Phosphotyrosine. Disordered stretches follow at residues 159-290, 306-375, and 388-421; these read KHGN…APPL, APGS…LTPQ, and NIADSPTPPPPPPPDDIPMFDDSPPPPPPPPVDY. The span at 161–175 shows a compositional bias: polar residues; it reads GNNQPARTGTLSRTN. Phosphothreonine is present on residues T174 and T178. S183 and S187 each carry phosphoserine. The residue at position 213 (Y213) is a Phosphotyrosine; by ABL1. Position 215 is a phosphothreonine (T215). Residues S216, S222, and S225 each carry the phosphoserine modification. Residues 222–235 show a composition bias toward polar residues; the sequence is SQHSPGRTASLNQR. The span at 248–258 shows a compositional bias: low complexity; that stretch reads SRENSGSSSIG. Over residues 278-290 the composition is skewed to pro residues; it reads VPPPSGAPPAPPL. Residues 307–322 are compositionally biased toward polar residues; it reads PGSQYGTMTRQISRHN. 2 positions are modified to phosphoserine: S319 and S323. Over residues 337 to 347 the composition is skewed to polar residues; sequence PSVTAQFSAQP. Pro residues-rich tracts occupy residues 393–403 and 410–419; these read PTPPPPPPPDD and SPPPPPPPPV. Residues 446–505 form the SH3 domain; sequence NYIEKVVAIYDYTKDKDDELSFMEGAIIYVIKKNDDGWYEGVCNRVTGLFPGNYVESIMH. Y455 is modified (phosphotyrosine). S466 carries the phosphoserine modification. At T507 the chain carries Phosphothreonine.

This sequence belongs to the ABI family. Interacts with ABL1, ENAH, STX1A, SNAP25, VAMP2, EPS8, and through its N-terminus with WASF1. Part of a complex consisting of ABI1, STX1A and SNAP25. Part of a complex consisting of ABI1, EPS8 and SOS1. Interacts with SOS1, SOS2, GRB2, SPTA1 and the first SH3 domain of NCK1. Isoform 6 does not interact with NCK1. Component of the WAVE2 complex composed of ABI1, CYFIP1/SRA1, NCKAP1/NAP1 (NCKAP1l/HEM1 in hematopoietic cells) and WASF2/WAVE2. Interacts (via SH3 domain) with SHANK2 and SHANK3, but not SHANK1; the interaction is direct. Interacts with the heterodimer MYC:MAX; the interaction may enhance MYC:MAX transcriptional activity. Interacts with FNBP1L (via the SH3 domain), WASF2, and CDC42, but only in the presence of FNBP1L. As to quaternary structure, (Microbial infection) Interacts with human cytomegalovirus/HHV-5 protein UL135. Phosphorylated on tyrosine residues after serum stimulation or induction by v-Abl. Seems to be phosphorylated at Tyr-53 by ABL1, required for nuclear but not for synaptic localization. As to expression, widely expressed, with highest expression in brain.

The protein resides in the cytoplasm. Its subcellular location is the nucleus. It is found in the cell projection. It localises to the lamellipodium. The protein localises to the filopodium. The protein resides in the growth cone. Its subcellular location is the postsynaptic density. It is found in the cytoskeleton. Functionally, may act in negative regulation of cell growth and transformation by interacting with nonreceptor tyrosine kinases ABL1 and/or ABL2. May play a role in regulation of EGF-induced Erk pathway activation. Involved in cytoskeletal reorganization and EGFR signaling. Together with EPS8 participates in transduction of signals from Ras to Rac. In vitro, a trimeric complex of ABI1, EPS8 and SOS1 exhibits Rac specific guanine nucleotide exchange factor (GEF) activity and ABI1 seems to act as an adapter in the complex. Regulates ABL1/c-Abl-mediated phosphorylation of ENAH. Recruits WASF1 to lamellipodia and there seems to regulate WASF1 protein level. In brain, seems to regulate the dendritic outgrowth and branching as well as to determine the shape and number of synaptic contacts of developing neurons. This is Abl interactor 1 from Homo sapiens (Human).